Here is a 258-residue protein sequence, read N- to C-terminus: Ubiquinone/menaquinone biosynthesis C-methyltransferase UbiE (258 aa).

The disordered stretch occupies residues 1–20 (MSESRTSADGGMETSYGFRE). Residues Thr-81, Asp-102, and 130–131 (NA) each bind S-adenosyl-L-methionine.

The protein belongs to the class I-like SAM-binding methyltransferase superfamily. MenG/UbiE family.

The enzyme catalyses a 2-demethylmenaquinol + S-adenosyl-L-methionine = a menaquinol + S-adenosyl-L-homocysteine + H(+). The catalysed reaction is a 2-methoxy-6-(all-trans-polyprenyl)benzene-1,4-diol + S-adenosyl-L-methionine = a 5-methoxy-2-methyl-3-(all-trans-polyprenyl)benzene-1,4-diol + S-adenosyl-L-homocysteine + H(+). The protein operates within quinol/quinone metabolism; menaquinone biosynthesis; menaquinol from 1,4-dihydroxy-2-naphthoate: step 2/2. It participates in cofactor biosynthesis; ubiquinone biosynthesis. Methyltransferase required for the conversion of demethylmenaquinol (DMKH2) to menaquinol (MKH2) and the conversion of 2-polyprenyl-6-methoxy-1,4-benzoquinol (DDMQH2) to 2-polyprenyl-3-methyl-6-methoxy-1,4-benzoquinol (DMQH2). The polypeptide is Ubiquinone/menaquinone biosynthesis C-methyltransferase UbiE (Rhizobium etli (strain CIAT 652)).